The primary structure comprises 63 residues: Cecropin (63 aa).

Residues 1–23 form the signal peptide; that stretch reads MNFYKIFVFIALILALSVSQSEA. Arginine 62 is modified (arginine amide).

Monomer. Hemolymph.

It localises to the secreted. In terms of biological role, cecropins have lytic and antibacterial activity against several Gram-negative bacteria. In Glossina morsitans morsitans (Savannah tsetse fly), this protein is Cecropin.